A 708-amino-acid polypeptide reads, in one-letter code: Lactotransferrin (708 aa).

The N-terminal stretch at 1-19 is a signal peptide; that stretch reads MKLLFLALLSLLALGPSLA. Transferrin-like domains are found at residues 25–352 and 364–693; these read VRWC…NLKE and VVWC…NLRQ. Disulfide bonds link Cys-28-Cys-64 and Cys-38-Cys-55. Asp-79 is a Fe(3+) binding site. Arg-92 is an active-site residue. Position 111 (Tyr-111) interacts with Fe(3+). Disulfide bonds link Cys-134–Cys-217, Cys-176–Cys-192, Cys-179–Cys-202, Cys-189–Cys-200, and Cys-250–Cys-264. Thr-136 lines the hydrogencarbonate pocket. N-linked (GlcNAc...) asparagine glycosylation occurs at Asn-139. 3 residues coordinate hydrogencarbonate: Arg-140, Ala-142, and Gly-143. Position 211 (Tyr-211) interacts with Fe(3+). His-272 contacts Fe(3+). Ser-278 functions as the Nucleophile in the catalytic mechanism. 2 disulfide bridges follow: Cys-367/Cys-399 and Cys-377/Cys-390. N-linked (GlcNAc...) asparagine glycosylation is present at Asn-385. Fe(3+) is bound by residues Asp-414 and Asp-452. 4 disulfides stabilise this stretch: Cys-476/Cys-551, Cys-510/Cys-524, Cys-521/Cys-534, and Cys-592/Cys-606. Residues Thr-478, Arg-482, Ala-484, and Gly-485 each coordinate hydrogencarbonate. The N-linked (GlcNAc...) asparagine glycan is linked to Asn-495. Tyr-545 is a Fe(3+) binding site. His-614 is a binding site for Fe(3+).

Belongs to the transferrin family. As to quaternary structure, monomer. Found in a complex with LTF, CLU, EPPIN and SEMG1. Interacts with prey activated coagulation factor X; the interaction inhibits coagulation factor X catalytic activity. Found in a complex with MPO and LTF; interacts directly with CP, allows Fe(3+) incorporation into LTF and activation of CP ferroxidase activity. In terms of processing, N-glycosylated. Glycosylation is important for draculin anticoagulant activity. Probably also O-glycosylated. In terms of tissue distribution, expressed in the submaxillary gland and secreted in the saliva (at protein level).

It is found in the secreted. Its function is as follows. Transferrins are iron binding transport proteins which can bind two Fe(3+) ions in association with the binding of an anion, usually bicarbonate. In terms of biological role, major iron-binding and multifunctional protein found in exocrine fluids such as breast milk and mucosal secretions. Has antimicrobial activity. Antimicrobial properties may include bacteriostasis, which is related to its ability to sequester free iron and thus inhibit microbial growth, as well as direct bactericidal properties leading to the release of lipopolysaccharides from the bacterial outer membrane. May have anabolic, differentiating and anti-apoptotic effects on osteoblasts and may also inhibit osteoclastogenesis, possibly playing a role in the regulation of bone growth. May interfere with the lipopolysaccharide (LPS)-stimulated TLR4 signaling. The lactotransferrin transferrin-like domain 1 functions as a serine protease of the peptidase S60 family that cuts arginine rich regions. This function contributes to the antimicrobial activity. Shows a preferential cleavage at -Arg-Ser-Arg-Arg-|- and -Arg-Arg-Ser-Arg-|-, and of Z-Phe-Arg-|-aminomethylcoumarin sites. Functionally, acts as an anticoagulant of the blood coagulation cascade of the bat's prey by inhibiting coagulation factor IX and activated coagulation factor X. The chain is Lactotransferrin from Desmodus rotundus (Vampire bat).